The primary structure comprises 660 residues: Junctophilin-1 (660 aa).

Residues 1–638 (MTGGRFDFDD…EKEANSGPNS (638 aa)) lie on the Cytoplasmic side of the membrane. 5 MORN repeats span residues 14–36 (YCGG…KGQG), 38–59 (YSGS…SGNT), 60–82 (YQGY…KWMY), 106–128 (YEGT…DGGT), and 129–151 (YQGQ…PYGM). Phosphoserine occurs at positions 157, 216, and 220. The interval 228–247 (SKSSISSKRSSVRSDAAMSR) is disordered. 2 MORN repeats span residues 281–303 (YMGE…NGMK) and 304–326 (YEGE…DGSK). Residues 437–454 (NPEEKVLEKPPSPKESPH) show a composition bias toward basic and acidic residues. The interval 437–631 (NPEEKVLEKP…NDTCPSLEKE (195 aa)) is disordered. Position 452 is a phosphoserine (Ser452). The residue at position 461 (Thr461) is a Phosphothreonine. Phosphoserine occurs at positions 465, 469, and 475. Positions 466–477 (PESSPKQSHSPQ) are enriched in low complexity. Basic and acidic residues-rich tracts occupy residues 562–571 (PPEDREDDRG) and 598–612 (VAKE…KKSE). The chain crosses the membrane as a helical; Anchor for type IV membrane protein span at residues 639–659 (IMIVLVMLLNIGLAILFVHFL).

Belongs to the junctophilin family. As to expression, specifically expressed in skeletal muscle. Weakly expressed in embryos and neonates. Abundant in young adult muscles.

The protein localises to the cell membrane. The protein resides in the endoplasmic reticulum membrane. Its subcellular location is the sarcoplasmic reticulum membrane. In terms of biological role, junctophilins contribute to the formation of junctional membrane complexes (JMCs) which link the plasma membrane with the endoplasmic or sarcoplasmic reticulum in excitable cells. Provides a structural foundation for functional cross-talk between the cell surface and intracellular calcium release channels. JPH1 contributes to the construction of the skeletal muscle triad by linking the t-tubule (transverse-tubule) and SR (sarcoplasmic reticulum) membranes. The protein is Junctophilin-1 (Jph1) of Mus musculus (Mouse).